The primary structure comprises 136 residues: MLQPKRTKFRKVHKGRNRGIASGTEVSFGTYGLKAVGRCRLTARQIEAARRAMSRAVKRQGKIWIRVFPDKPITEKPLEVRMGKGKGNVEYWVALIQPGKVLYEMDGVSEEVARNAFALAAAKLPVKTTFVTKTVM.

Belongs to the universal ribosomal protein uL16 family. In terms of assembly, part of the 50S ribosomal subunit.

Binds 23S rRNA and is also seen to make contacts with the A and possibly P site tRNAs. This chain is Large ribosomal subunit protein uL16, found in Haemophilus influenzae (strain 86-028NP).